A 474-amino-acid polypeptide reads, in one-letter code: 3-isopropylmalate dehydratase large subunit (474 aa).

[4Fe-4S] cluster-binding residues include Cys353, Cys414, and Cys417.

It belongs to the aconitase/IPM isomerase family. LeuC type 1 subfamily. Heterodimer of LeuC and LeuD. The cofactor is [4Fe-4S] cluster.

It carries out the reaction (2R,3S)-3-isopropylmalate = (2S)-2-isopropylmalate. The protein operates within amino-acid biosynthesis; L-leucine biosynthesis; L-leucine from 3-methyl-2-oxobutanoate: step 2/4. Catalyzes the isomerization between 2-isopropylmalate and 3-isopropylmalate, via the formation of 2-isopropylmaleate. The sequence is that of 3-isopropylmalate dehydratase large subunit from Xylella fastidiosa (strain 9a5c).